A 479-amino-acid chain; its full sequence is 3-phytase B (479 aa).

The first 19 residues, Met1–Ala19, serve as a signal peptide directing secretion. The Nucleophile role is filled by His82. Residues Asn106, Asn191, Asn227, Asn250, and Asn315 are each glycosylated (N-linked (GlcNAc...) asparagine). Asp338 acts as the Proton donor in catalysis. Residues Asn425, Asn442, and Asn458 are each glycosylated (N-linked (GlcNAc...) asparagine).

This sequence belongs to the histidine acid phosphatase family.

The catalysed reaction is 1D-myo-inositol hexakisphosphate + H2O = 1D-myo-inositol 1,2,4,5,6-pentakisphosphate + phosphate. Catalyzes the hydrolysis of inorganic orthophosphate from phytate. In Aspergillus niger, this protein is 3-phytase B (phyB).